The following is a 137-amino-acid chain: Basic phospholipase A2 beta-bungarotoxin A5 chain (137 aa).

The first 9 residues, 1-9 (AVCVSLLGA), serve as a signal peptide directing secretion. Positions 10-17 (ANIPPQHL) are excised as a propeptide. Intrachain disulfides connect Cys44/Cys136, Cys46/Cys62, Cys61/Cys117, Cys68/Cys110, Cys78/Cys103, and Cys96/Cys108. Positions 45, 47, and 49 each coordinate Ca(2+). Residue His65 is part of the active site. Residue Asp66 coordinates Ca(2+). Asp111 is a catalytic residue.

Belongs to the phospholipase A2 family. Group I subfamily. D49 sub-subfamily. As to quaternary structure, heterodimer; disulfide-linked. The A chains have phospholipase A2 activity and the B chains show homology with the basic protease inhibitors. Ca(2+) is required as a cofactor. As to expression, expressed by the venom gland.

It localises to the secreted. The enzyme catalyses a 1,2-diacyl-sn-glycero-3-phosphocholine + H2O = a 1-acyl-sn-glycero-3-phosphocholine + a fatty acid + H(+). Functionally, snake venom phospholipase A2 (PLA2) that inhibits neuromuscular transmission by blocking acetylcholine release from the nerve termini. PLA2 catalyzes the calcium-dependent hydrolysis of the 2-acyl groups in 3-sn-phosphoglycerides. This chain is Basic phospholipase A2 beta-bungarotoxin A5 chain, found in Bungarus multicinctus (Many-banded krait).